Consider the following 228-residue polypeptide: 2,3-bisphosphoglycerate-dependent phosphoglycerate mutase (228 aa).

Residues Arg8–Asn15, Thr21–Gly22, Arg60, Glu87–Tyr90, Lys98, Arg114–Arg115, and Gly183–Asn184 contribute to the substrate site. The active-site Tele-phosphohistidine intermediate is His9. The active-site Proton donor/acceptor is the Glu87.

Belongs to the phosphoglycerate mutase family. BPG-dependent PGAM subfamily.

It carries out the reaction (2R)-2-phosphoglycerate = (2R)-3-phosphoglycerate. Its pathway is carbohydrate degradation; glycolysis; pyruvate from D-glyceraldehyde 3-phosphate: step 3/5. Its function is as follows. Catalyzes the interconversion of 2-phosphoglycerate and 3-phosphoglycerate. This chain is 2,3-bisphosphoglycerate-dependent phosphoglycerate mutase, found in Staphylococcus saprophyticus subsp. saprophyticus (strain ATCC 15305 / DSM 20229 / NCIMB 8711 / NCTC 7292 / S-41).